Reading from the N-terminus, the 402-residue chain is DNA primase DnaG (402 aa).

A Toprim domain is found at 165 to 243 (PNLIIVEGRA…KIDFVARAPV (79 aa)). Glu-171, Asp-216, and Asp-218 together coordinate Mg(2+).

This sequence belongs to the archaeal DnaG primase family. In terms of assembly, forms a ternary complex with MCM helicase and DNA. Component of the archaeal exosome complex. Mg(2+) is required as a cofactor.

The enzyme catalyses ssDNA + n NTP = ssDNA/pppN(pN)n-1 hybrid + (n-1) diphosphate.. Its function is as follows. RNA polymerase that catalyzes the synthesis of short RNA molecules used as primers for DNA polymerase during DNA replication. Also part of the exosome, which is a complex involved in RNA degradation. Acts as a poly(A)-binding protein that enhances the interaction between heteromeric, adenine-rich transcripts and the exosome. The sequence is that of DNA primase DnaG from Saccharolobus islandicus (strain Y.N.15.51 / Yellowstone #2) (Sulfolobus islandicus).